A 142-amino-acid polypeptide reads, in one-letter code: Large ribosomal subunit protein uL13 (142 aa).

The protein belongs to the universal ribosomal protein uL13 family. Part of the 50S ribosomal subunit.

This protein is one of the early assembly proteins of the 50S ribosomal subunit, although it is not seen to bind rRNA by itself. It is important during the early stages of 50S assembly. This Wigglesworthia glossinidia brevipalpis protein is Large ribosomal subunit protein uL13.